The following is a 276-amino-acid chain: Putative pyruvate, phosphate dikinase regulatory protein (276 aa).

ADP is bound at residue 152–159 (GISRTSKT).

The protein belongs to the pyruvate, phosphate/water dikinase regulatory protein family. PDRP subfamily.

It carries out the reaction N(tele)-phospho-L-histidyl/L-threonyl-[pyruvate, phosphate dikinase] + ADP = N(tele)-phospho-L-histidyl/O-phospho-L-threonyl-[pyruvate, phosphate dikinase] + AMP + H(+). It catalyses the reaction N(tele)-phospho-L-histidyl/O-phospho-L-threonyl-[pyruvate, phosphate dikinase] + phosphate + H(+) = N(tele)-phospho-L-histidyl/L-threonyl-[pyruvate, phosphate dikinase] + diphosphate. Its function is as follows. Bifunctional serine/threonine kinase and phosphorylase involved in the regulation of the pyruvate, phosphate dikinase (PPDK) by catalyzing its phosphorylation/dephosphorylation. This Staphylococcus carnosus (strain TM300) protein is Putative pyruvate, phosphate dikinase regulatory protein.